A 624-amino-acid chain; its full sequence is Elongation factor 4 (624 aa).

One can recognise a tr-type G domain in the interval 17–203 (ALIRNFCIIA…RVVRDVPAPV (187 aa)). Residues 29 to 34 (DHGKST) and 150 to 153 (NKID) each bind GTP.

This sequence belongs to the TRAFAC class translation factor GTPase superfamily. Classic translation factor GTPase family. LepA subfamily.

The protein localises to the cell membrane. It carries out the reaction GTP + H2O = GDP + phosphate + H(+). Its function is as follows. Required for accurate and efficient protein synthesis under certain stress conditions. May act as a fidelity factor of the translation reaction, by catalyzing a one-codon backward translocation of tRNAs on improperly translocated ribosomes. Back-translocation proceeds from a post-translocation (POST) complex to a pre-translocation (PRE) complex, thus giving elongation factor G a second chance to translocate the tRNAs correctly. Binds to ribosomes in a GTP-dependent manner. This is Elongation factor 4 from Streptomyces griseus subsp. griseus (strain JCM 4626 / CBS 651.72 / NBRC 13350 / KCC S-0626 / ISP 5235).